The sequence spans 296 residues: Lipoyl synthase (296 aa).

Cys37, Cys42, Cys48, Cys63, Cys67, Cys70, and Ser276 together coordinate [4Fe-4S] cluster. Residues 49 to 265 form the Radical SAM core domain; it reads WSKKHTTVMI…ERLAKTKGFL (217 aa).

It belongs to the radical SAM superfamily. Lipoyl synthase family. [4Fe-4S] cluster serves as cofactor.

The protein localises to the cytoplasm. The enzyme catalyses [[Fe-S] cluster scaffold protein carrying a second [4Fe-4S](2+) cluster] + N(6)-octanoyl-L-lysyl-[protein] + 2 oxidized [2Fe-2S]-[ferredoxin] + 2 S-adenosyl-L-methionine + 4 H(+) = [[Fe-S] cluster scaffold protein] + N(6)-[(R)-dihydrolipoyl]-L-lysyl-[protein] + 4 Fe(3+) + 2 hydrogen sulfide + 2 5'-deoxyadenosine + 2 L-methionine + 2 reduced [2Fe-2S]-[ferredoxin]. Its pathway is protein modification; protein lipoylation via endogenous pathway; protein N(6)-(lipoyl)lysine from octanoyl-[acyl-carrier-protein]: step 2/2. Functionally, catalyzes the radical-mediated insertion of two sulfur atoms into the C-6 and C-8 positions of the octanoyl moiety bound to the lipoyl domains of lipoate-dependent enzymes, thereby converting the octanoylated domains into lipoylated derivatives. The polypeptide is Lipoyl synthase (Rickettsia rickettsii (strain Iowa)).